Reading from the N-terminus, the 44-residue chain is Putative protein PsbN (44 aa).

The helical transmembrane segment at 3-23 (IISFLSTIFLGFFIISTTIYS) threads the bilayer.

Belongs to the PsbN family.

It localises to the plastid. It is found in the chloroplast thylakoid membrane. Functionally, may play a role in photosystem I and II biogenesis. The sequence is that of Putative protein PsbN from Euglena gracilis.